A 676-amino-acid polypeptide reads, in one-letter code: Maternal embryonic leucine zipper kinase (676 aa).

Residues 13–265 form the Protein kinase domain; the sequence is YEVYETIGSG…VKHLLDHPWV (253 aa). ATP is bound by residues 19-27 and Lys42; that span reads IGSGGFAKV. Asp134 (proton acceptor) is an active-site residue. Thr169 is modified (phosphothreonine; by autocatalysis). Ser173 bears the Phosphoserine; by autocatalysis mark. A UBA-like region spans residues 284–323; that stretch reads IDEDCITEMAVTFKQSKQRTIQLVSEWKYDQITATYLLLL. The autoinhibitory region stretch occupies residues 328–673; the sequence is QGRPVRLRAE…VEDILSSSSQ (346 aa). Positions 423–443 are enriched in basic and acidic residues; the sequence is EHSRPCRQKPERRERTKENKE. The disordered stretch occupies residues 423 to 518; it reads EHSRPCRQKP…QQNGQQGELN (96 aa). The span at 462–489 shows a compositional bias: polar residues; the sequence is TPTSSRKVKSNRTVMTTPNHNNNKSSEV. Positions 508 to 518 are enriched in low complexity; that stretch reads QQQNGQQGELN. One can recognise a KA1 domain in the interval 624 to 673; it reads SDFGKVTMQFELEVCLLQKPEVVGIRRQRLKGDAWVYKHLVEDILSSSSQ.

This sequence belongs to the protein kinase superfamily. CAMK Ser/Thr protein kinase family. SNF1 subfamily. Autophosphorylated: autophosphorylation of the T-loop at Thr-169 and Ser-173 is required for activation. Strongly expressed in the eye, gill, kidney, spleen, muscle, ovary and testis and weakly in the heart, liver, and gut. Expressed in the brain and lateral mesoderm at 12 hours post-fertilization (hpf).

The protein resides in the cell membrane. It catalyses the reaction L-seryl-[protein] + ATP = O-phospho-L-seryl-[protein] + ADP + H(+). The catalysed reaction is L-threonyl-[protein] + ATP = O-phospho-L-threonyl-[protein] + ADP + H(+). Activated by autophosphorylation of the T-loop at Thr-169 and Ser-173: in contrast to other members of the SNF1 subfamily, phosphorylation at Thr-169 is not mediated by STK11/LKB1 but via autophosphorylation instead. Serine/threonine-protein kinase involved in various processes such as cell cycle regulation, self-renewal of stem cells, apoptosis and splicing regulation. Also plays a role in primitive hematopoiesis, possibly by affecting the expression of genes critical for hematopoiesis. This is Maternal embryonic leucine zipper kinase (melk) from Danio rerio (Zebrafish).